A 520-amino-acid chain; its full sequence is MAIKSDQISSLIKQQLEKYDSTLKIDEVGTVTYVGDGVARASGLANVMSGELVEFENGVYGMAQNLEESEVGIIVLGDFDGISQGDTVKRTGKVMEVPVGDEMIGRVVNALGQPIDGNGAIKTKHTRPVEFKAPGVMQRKSVFEPLQTGIKVIDALVPIGRGQRELIIGDRKTGKTSLAIDTILNQKDQDMIVVYVAIGQKDSTVRTQVETLREMGALDYTIVVSAAPSEPAPMLYLAPYVGAALGEYFMYNGKHVLIVYDDLSKQATAYRELSLILRRPPGREAYPGDVFYLHSRLLERAAKLSDELGGGSMTALPIIETQAGDVSAYIPTNVISITDGQIFLDADQFYSGNRPAIDAGTSVSRVGGDAQIKAMKKVSGTLRLDLASYHELEAFAQFGSDLDAPTQAKLARGRRTVEVLNQPLHQPMPVEHQVIVLYALTHGYLDDIDVSDIQRFQKELIDFVSGDKSYKKIFAAIKKTGNLPDEKDINSAIDDFKKHFSKSVEPTDYVAPSTKQEANK.

169 to 176 (GDRKTGKT) is an ATP binding site.

The protein belongs to the ATPase alpha/beta chains family. In terms of assembly, F-type ATPases have 2 components, CF(1) - the catalytic core - and CF(0) - the membrane proton channel. CF(1) has five subunits: alpha(3), beta(3), gamma(1), delta(1), epsilon(1). CF(0) has three main subunits: a(1), b(2) and c(9-12). The alpha and beta chains form an alternating ring which encloses part of the gamma chain. CF(1) is attached to CF(0) by a central stalk formed by the gamma and epsilon chains, while a peripheral stalk is formed by the delta and b chains.

The protein localises to the cell membrane. The enzyme catalyses ATP + H2O + 4 H(+)(in) = ADP + phosphate + 5 H(+)(out). In terms of biological role, produces ATP from ADP in the presence of a proton gradient across the membrane. The alpha chain is a regulatory subunit. The chain is ATP synthase subunit alpha from Oenococcus oeni (strain ATCC BAA-331 / PSU-1).